A 129-amino-acid chain; its full sequence is Lysozyme C-2 (129 aa).

Residues lysine 1–leucine 129 enclose the C-type lysozyme domain. 4 disulfides stabilise this stretch: cysteine 6–cysteine 127, cysteine 30–cysteine 115, cysteine 65–cysteine 81, and cysteine 77–cysteine 95. Catalysis depends on residues glutamate 35 and aspartate 53.

It belongs to the glycosyl hydrolase 22 family. As to quaternary structure, monomer.

It catalyses the reaction Hydrolysis of (1-&gt;4)-beta-linkages between N-acetylmuramic acid and N-acetyl-D-glucosamine residues in a peptidoglycan and between N-acetyl-D-glucosamine residues in chitodextrins.. Its function is as follows. Lysozymes have primarily a bacteriolytic function; those in tissues and body fluids are associated with the monocyte-macrophage system and enhance the activity of immunoagents. This Capra hircus (Goat) protein is Lysozyme C-2.